The chain runs to 199 residues: NAD(P)H dehydrogenase (quinone) (199 aa).

The 187-residue stretch at 4–190 (VLVLYYSSYG…TGARYQGRKI (187 aa)) folds into the Flavodoxin-like domain. Residues 10–15 (SSYGHL) and 78–80 (TRF) contribute to the FMN site. Tyr-12 contributes to the NAD(+) binding site. Residue Trp-98 coordinates substrate. Residues 113 to 119 (STATQHG) and His-134 contribute to the FMN site.

Belongs to the WrbA family. Requires FMN as cofactor.

It carries out the reaction a quinone + NADH + H(+) = a quinol + NAD(+). The enzyme catalyses a quinone + NADPH + H(+) = a quinol + NADP(+). This chain is NAD(P)H dehydrogenase (quinone), found in Caulobacter vibrioides (strain ATCC 19089 / CIP 103742 / CB 15) (Caulobacter crescentus).